A 118-amino-acid polypeptide reads, in one-letter code: Small ribosomal subunit protein uS13 (118 aa).

The disordered stretch occupies residues 91-118 (HRRSLPVRGQRTKTNARTRKGPRKPIRK).

It belongs to the universal ribosomal protein uS13 family. In terms of assembly, part of the 30S ribosomal subunit. Forms a loose heterodimer with protein S19. Forms two bridges to the 50S subunit in the 70S ribosome.

Functionally, located at the top of the head of the 30S subunit, it contacts several helices of the 16S rRNA. In the 70S ribosome it contacts the 23S rRNA (bridge B1a) and protein L5 of the 50S subunit (bridge B1b), connecting the 2 subunits; these bridges are implicated in subunit movement. Contacts the tRNAs in the A and P-sites. The polypeptide is Small ribosomal subunit protein uS13 (Marinomonas sp. (strain MWYL1)).